A 178-amino-acid chain; its full sequence is Large ribosomal subunit protein uL6 (178 aa).

This sequence belongs to the universal ribosomal protein uL6 family. As to quaternary structure, part of the 50S ribosomal subunit.

Functionally, this protein binds to the 23S rRNA, and is important in its secondary structure. It is located near the subunit interface in the base of the L7/L12 stalk, and near the tRNA binding site of the peptidyltransferase center. The protein is Large ribosomal subunit protein uL6 of Francisella philomiragia subsp. philomiragia (strain ATCC 25017 / CCUG 19701 / FSC 153 / O#319-036).